Here is a 143-residue protein sequence, read N- to C-terminus: Sirohydrochlorin cobaltochelatase (143 aa).

The active-site Proton acceptor is the H18. H18 lines the Co(2+) pocket. Residue H18 coordinates Ni(2+). Substrate is bound by residues R53 and 78 to 83 (LAHGVH). Residue H83 coordinates Co(2+). H83 contacts Ni(2+).

The protein belongs to the CbiX family. CbiXS subfamily. Homotetramer; dimer of dimers.

It catalyses the reaction Co-sirohydrochlorin + 2 H(+) = sirohydrochlorin + Co(2+). The catalysed reaction is Ni-sirohydrochlorin + 2 H(+) = sirohydrochlorin + Ni(2+). It functions in the pathway cofactor biosynthesis; adenosylcobalamin biosynthesis; cob(II)yrinate a,c-diamide from sirohydrochlorin (anaerobic route): step 1/10. Its function is as follows. Catalyzes the insertion of Co(2+) into sirohydrochlorin as part of the anaerobic pathway to cobalamin biosynthesis. Involved in the biosynthesis of the unique nickel-containing tetrapyrrole coenzyme F430, the prosthetic group of methyl-coenzyme M reductase (MCR), which plays a key role in methanogenesis and anaerobic methane oxidation (Potential). Catalyzes the insertion of Ni(2+) into sirohydrochlorin to yield Ni-sirohydrochlorin (Potential). This is Sirohydrochlorin cobaltochelatase from Methanothermobacter thermautotrophicus (strain ATCC 29096 / DSM 1053 / JCM 10044 / NBRC 100330 / Delta H) (Methanobacterium thermoautotrophicum).